The sequence spans 277 residues: Formamidopyrimidine-DNA glycosylase (277 aa).

Pro2 functions as the Schiff-base intermediate with DNA in the catalytic mechanism. The active-site Proton donor is Glu3. Catalysis depends on Lys60, which acts as the Proton donor; for beta-elimination activity. DNA contacts are provided by His94, Arg113, and Arg156. The FPG-type zinc-finger motif lies at 241–275; that stretch reads KVYNREGLPCPHCGKPIQRIKVAGRSSYYCSSCQK. The active-site Proton donor; for delta-elimination activity is Arg265.

The protein belongs to the FPG family. In terms of assembly, monomer. Zn(2+) is required as a cofactor.

It carries out the reaction Hydrolysis of DNA containing ring-opened 7-methylguanine residues, releasing 2,6-diamino-4-hydroxy-5-(N-methyl)formamidopyrimidine.. It catalyses the reaction 2'-deoxyribonucleotide-(2'-deoxyribose 5'-phosphate)-2'-deoxyribonucleotide-DNA = a 3'-end 2'-deoxyribonucleotide-(2,3-dehydro-2,3-deoxyribose 5'-phosphate)-DNA + a 5'-end 5'-phospho-2'-deoxyribonucleoside-DNA + H(+). In terms of biological role, involved in base excision repair of DNA damaged by oxidation or by mutagenic agents. Acts as a DNA glycosylase that recognizes and removes damaged bases. Has a preference for oxidized purines, such as 7,8-dihydro-8-oxoguanine (8-oxoG). Has AP (apurinic/apyrimidinic) lyase activity and introduces nicks in the DNA strand. Cleaves the DNA backbone by beta-delta elimination to generate a single-strand break at the site of the removed base with both 3'- and 5'-phosphates. In Desulforamulus reducens (strain ATCC BAA-1160 / DSM 100696 / MI-1) (Desulfotomaculum reducens), this protein is Formamidopyrimidine-DNA glycosylase.